Here is a 644-residue protein sequence, read N- to C-terminus: Exoribonuclease 2 (644 aa).

Positions 189–516 constitute an RNB domain; it reads RQDLTALNFV…NHRLLKAVIK (328 aa). Residues 561–643 form the S1 motif domain; sequence NTRFAAEIID…ETRSIIARPA (83 aa).

The protein belongs to the RNR ribonuclease family. RNase II subfamily.

It localises to the cytoplasm. The enzyme catalyses Exonucleolytic cleavage in the 3'- to 5'-direction to yield nucleoside 5'-phosphates.. Its function is as follows. Involved in mRNA degradation. Hydrolyzes single-stranded polyribonucleotides processively in the 3' to 5' direction. The protein is Exoribonuclease 2 of Salmonella choleraesuis (strain SC-B67).